The sequence spans 618 residues: Probable Xaa-Pro aminopeptidase P (618 aa).

Mn(2+) is bound by residues D415, D426, E524, and E538.

It belongs to the peptidase M24B family. Mn(2+) serves as cofactor.

It catalyses the reaction Release of any N-terminal amino acid, including proline, that is linked to proline, even from a dipeptide or tripeptide.. In terms of biological role, catalyzes the removal of a penultimate prolyl residue from the N-termini of peptides. The polypeptide is Probable Xaa-Pro aminopeptidase P (AMPP) (Pyricularia oryzae (strain 70-15 / ATCC MYA-4617 / FGSC 8958) (Rice blast fungus)).